The chain runs to 201 residues: Phospholipase A2 inhibitor NAI (201 aa).

A signal peptide spans M1–C19. Cystine bridges form between C22-C47, C25-C32, C40-C68, C74-C95, C96-C101, C119-C144, C137-C166, and C170-C191. An N-linked (GlcNAc...) asparagine glycan is attached at N176.

It belongs to the CNF-like-inhibitor family. As to quaternary structure, heterotrimer of 2 subunits A and 1 subunit B; non-covalently linked. In terms of processing, N-glycosylated, probably by biantennary structure. Glycosylation does not change PLA2 inhibitory activity. As to expression, expressed by the liver.

The protein localises to the secreted. Inhibits the enzymatic activity of all phospholipase A2 tested, binding them with micromole to nanomole affinity. This is Phospholipase A2 inhibitor NAI from Notechis ater (Black tiger snake).